Consider the following 203-residue polypeptide: Pro-FMRFamide-related neuropeptide VF (203 aa).

An N-terminal signal peptide occupies residues 1–26 (MEIISSKRFILLTLATSSFLTSNTLC). Positions 27 to 57 (SDELMMPHFHSKEGYGKYYQLRGIPKGVKER) are excised as a propeptide. At phenylalanine 94 the chain carries Phenylalanine amide. Positions 97 to 106 (NIEDRRSPRA) are excised as a propeptide. Phenylalanine 125 carries the post-translational modification Phenylalanine amide. The propeptide occupies 128-203 (TTARRITKTL…QPVLQGAMKL (76 aa)). The interval 161 to 186 (HQEIQSPGQEQPRKRVFTETDDAERK) is disordered. Residues 171-186 (QPRKRVFTETDDAERK) show a composition bias toward basic and acidic residues.

It belongs to the FARP (FMRFamide related peptide) family. As to expression, isoform 1 is expressed at high levels in the hypothalamus and eye. Isoform 2 is specifically expressed in a region between the dorsomedial hypothalamic and ventromedial hypothalamic nuclei.

The protein localises to the secreted. Efficiently inhibits forskolin-induced production of cAMP. Acts as a potent negative regulator of gonadotropin synthesis and secretion. Induces secretion of prolactin. In terms of biological role, efficiently inhibits forskolin-induced production of cAMP. Blocks morphine-induced analgesia. This chain is Pro-FMRFamide-related neuropeptide VF (Npvf), found in Rattus norvegicus (Rat).